A 330-amino-acid polypeptide reads, in one-letter code: 3',5'-cyclic-nucleotide phosphodiesterase (330 aa).

The signal sequence occupies residues 1-22; sequence MFKNKLAVLFTCLSVFSFSAQS.

This sequence belongs to the cyclic nucleotide phosphodiesterase class-II family.

The protein localises to the periplasm. It catalyses the reaction a nucleoside 3',5'-cyclic phosphate + H2O = a nucleoside 5'-phosphate + H(+). Seems to allow the organism to grow on cAMP. The sequence is that of 3',5'-cyclic-nucleotide phosphodiesterase (cpdP) from Aliivibrio fischeri (Vibrio fischeri).